Here is a 513-residue protein sequence, read N- to C-terminus: Homeobox and leucine zipper protein Homez (513 aa).

The segment at residues 31 to 90 (WTQAVQTSELDGNEHLLQAFSYFPYPSLADIALLCLRHGLQMEKVKTWFMAQRLRCGISW) is a DNA-binding region (homeobox 1). Glycyl lysine isopeptide (Lys-Gly) (interchain with G-Cter in SUMO2) cross-links involve residues Lys156, Lys174, and Lys176. 5 disordered regions span residues 200 to 221 (LSKE…ASWN), 241 to 287 (SCKE…SFSP), 303 to 328 (RLRN…HQRK), 402 to 429 (PAIS…PPPD), and 480 to 513 (LDEE…IIRD). Over residues 205-217 (AGGGPDQSCGGGT) the composition is skewed to gly residues. Residues 248 to 260 (PSGTPPSSSASSP) are compositionally biased toward low complexity. Residue Ser320 is modified to Phosphoserine. 2 consecutive DNA-binding regions (homeobox) follow at residues 324 to 384 (QHQR…KHGQ) and 418 to 477 (TPPL…AEVV). Positions 327–332 (RKTKRK) match the Nuclear localization signal motif. Thr418 is modified (phosphothreonine). A compositionally biased stretch (pro residues) spans 419–429 (PPLPAPPPPPD).

In terms of assembly, homodimer or heterodimer (Potential). Interacts with HOXC8.

Its subcellular location is the nucleus. In terms of biological role, may function as a transcriptional regulator. The protein is Homeobox and leucine zipper protein Homez (Homez) of Rattus norvegicus (Rat).